We begin with the raw amino-acid sequence, 563 residues long: Coiled-coil domain-containing protein 38 (563 aa).

The stretch at 128-211 forms a coiled coil; sequence TKKKTIKRFE…SIKSDIAKTE (84 aa). The interval 265–310 is disordered; sequence DNSIDSDKMSVSEEWSSRRGSQGGRHGKHTLGQDSRKSSGFTRPES. Residues 269-281 show a composition bias toward basic and acidic residues; sequence DSDKMSVSEEWSS. 2 coiled-coil regions span residues 361–415 and 454–522; these read QDVD…RSRL and NAVQ…AVAQ. The disordered stretch occupies residues 543 to 563; it reads QELLLVSDTRSKSQDEEYFFS.

As to quaternary structure, interacts with CCDC42, CFAP53, IFT88 and ODF2. Interacts with CCDC146. Interacts with TEKT3. Interacts with ubiquitinated histone H2A. In terms of tissue distribution, expressed exclusively in testis where it is detected mainly in spermatogonia and spermatocytes (at protein level).

The protein localises to the cytoplasm. It is found in the cytoskeleton. It localises to the microtubule organizing center. Its subcellular location is the centrosome. The protein resides in the perinuclear region. The protein localises to the cell projection. It is found in the cilium. It localises to the flagellum. In terms of biological role, essential for male fertility. Required for sperm flagellum biogenesis. Also required for acrosome biogenesis. Required for the attachment of developing acrosomes to the nucleus during spermiogenesis and may be involved in the transport of fibrous sheath components. The protein is Coiled-coil domain-containing protein 38 (Ccdc38) of Mus musculus (Mouse).